We begin with the raw amino-acid sequence, 316 residues long: 1-aminocyclopropane-1-carboxylate oxidase 2 (316 aa).

A Fe2OG dioxygenase domain is found at 153–253; sequence PNFGTKVSNY…RMSLASFYNP (101 aa). Residues histidine 177, aspartate 179, and histidine 234 each contribute to the Fe cation site.

Belongs to the iron/ascorbate-dependent oxidoreductase family. Requires Fe cation as cofactor. Leaves.

The catalysed reaction is 1-aminocyclopropane-1-carboxylate + L-ascorbate + O2 = ethene + L-dehydroascorbate + hydrogen cyanide + CO2 + 2 H2O. The protein operates within alkene biosynthesis; ethylene biosynthesis via S-adenosyl-L-methionine; ethylene from S-adenosyl-L-methionine: step 2/2. The protein is 1-aminocyclopropane-1-carboxylate oxidase 2 (ACO2) of Solanum lycopersicum (Tomato).